The following is a 637-amino-acid chain: tRNA uridine 5-carboxymethylaminomethyl modification enzyme MnmG (637 aa).

Residue 14–19 participates in FAD binding; it reads GAGHAG. 279–293 is a binding site for NAD(+); the sequence is GPRYCPSIEDKVVRF.

Belongs to the MnmG family. Homodimer. Heterotetramer of two MnmE and two MnmG subunits. The cofactor is FAD.

The protein resides in the cytoplasm. NAD-binding protein involved in the addition of a carboxymethylaminomethyl (cmnm) group at the wobble position (U34) of certain tRNAs, forming tRNA-cmnm(5)s(2)U34. The sequence is that of tRNA uridine 5-carboxymethylaminomethyl modification enzyme MnmG from Desulfitobacterium hafniense (strain Y51).